The chain runs to 150 residues: Large ribosomal subunit protein bL9 (150 aa).

The protein belongs to the bacterial ribosomal protein bL9 family.

Functionally, binds to the 23S rRNA. In Buchnera aphidicola subsp. Schizaphis graminum (strain Sg), this protein is Large ribosomal subunit protein bL9.